Here is a 177-residue protein sequence, read N- to C-terminus: UPF0200 protein STK_09500 (177 aa).

Residue 11–18 (GMPGSGKG) coordinates ATP.

This sequence belongs to the UPF0200 family.

This Sulfurisphaera tokodaii (strain DSM 16993 / JCM 10545 / NBRC 100140 / 7) (Sulfolobus tokodaii) protein is UPF0200 protein STK_09500.